A 459-amino-acid chain; its full sequence is Cysteine--tRNA ligase (459 aa).

C28 contacts Zn(2+). A 'HIGH' region motif is present at residues 30–40 (VTVYDLCHIGH). The Zn(2+) site is built by C209, H234, and E238. The 'KMSKS' region motif lies at 266–270 (KMSKS). ATP is bound at residue K269.

Belongs to the class-I aminoacyl-tRNA synthetase family. Monomer. Requires Zn(2+) as cofactor.

The protein resides in the cytoplasm. The enzyme catalyses tRNA(Cys) + L-cysteine + ATP = L-cysteinyl-tRNA(Cys) + AMP + diphosphate. This Histophilus somni (strain 129Pt) (Haemophilus somnus) protein is Cysteine--tRNA ligase.